A 199-amino-acid polypeptide reads, in one-letter code: Large ribosomal subunit protein bL9 (199 aa).

Residues 149–166 are compositionally biased toward basic and acidic residues; sequence AEAERINRGEDINSRQED. Positions 149-199 are disordered; sequence AEAERINRGEDINSRQEDQDAAAEAIAAAGEFFDPEAQDETPETEAASEQQ. Acidic residues predominate over residues 181-191; the sequence is FDPEAQDETPE.

Belongs to the bacterial ribosomal protein bL9 family.

Functionally, binds to the 23S rRNA. This Afipia carboxidovorans (strain ATCC 49405 / DSM 1227 / KCTC 32145 / OM5) (Oligotropha carboxidovorans) protein is Large ribosomal subunit protein bL9.